A 259-amino-acid polypeptide reads, in one-letter code: 1,2-dihydroxy-1,2-dihydronaphthalene dehydrogenase (259 aa).

An NAD(+)-binding site is contributed by Ser-8–Ser-32. Position 140 (Ser-140) interacts with substrate. Tyr-153 acts as the Proton acceptor in catalysis.

This sequence belongs to the short-chain dehydrogenases/reductases (SDR) family.

The catalysed reaction is (1R,2S)-1,2-dihydronaphthalene-1,2-diol + NAD(+) = naphthalene-1,2-diol + NADH + H(+). The enzyme catalyses cis-1,2-dihydroxy-1,2-dihydrodibenzothiophene + NAD(+) = 1,2-dihydroxydibenzothiophene + NADH + H(+). Its pathway is aromatic compound metabolism; naphthalene degradation. Functionally, catalyzes the oxidation of naphthalene dihydrodiol into 1,2-dihydroxynaphthalene. This is 1,2-dihydroxy-1,2-dihydronaphthalene dehydrogenase (doxE) from Pseudomonas sp. (strain C18).